The primary structure comprises 164 residues: 6,7-dimethyl-8-ribityllumazine synthase (164 aa).

Residues Phe24, Ser62–Glu64, and Ala86–Ile88 each bind 5-amino-6-(D-ribitylamino)uracil. Gln91–Thr92 serves as a coordination point for (2S)-2-hydroxy-3-oxobutyl phosphate. The active-site Proton donor is His94. Phe119 contributes to the 5-amino-6-(D-ribitylamino)uracil binding site. Residue Arg133 coordinates (2S)-2-hydroxy-3-oxobutyl phosphate.

The protein belongs to the DMRL synthase family.

The catalysed reaction is (2S)-2-hydroxy-3-oxobutyl phosphate + 5-amino-6-(D-ribitylamino)uracil = 6,7-dimethyl-8-(1-D-ribityl)lumazine + phosphate + 2 H2O + H(+). It participates in cofactor biosynthesis; riboflavin biosynthesis; riboflavin from 2-hydroxy-3-oxobutyl phosphate and 5-amino-6-(D-ribitylamino)uracil: step 1/2. Functionally, catalyzes the formation of 6,7-dimethyl-8-ribityllumazine by condensation of 5-amino-6-(D-ribitylamino)uracil with 3,4-dihydroxy-2-butanone 4-phosphate. This is the penultimate step in the biosynthesis of riboflavin. This chain is 6,7-dimethyl-8-ribityllumazine synthase, found in Synechocystis sp. (strain ATCC 27184 / PCC 6803 / Kazusa).